We begin with the raw amino-acid sequence, 36 residues long: U-metritoxin-Msn1a (36 aa).

The region spanning 4-36 (CKDKLPACGEYRGSFCKLEKVKSNCEKTCGVKC) is the ShKT domain. Intrachain disulfides connect cysteine 4/cysteine 36, cysteine 11/cysteine 28, and cysteine 19/cysteine 32.

The protein belongs to the sea anemone type 1 potassium channel toxin family. Type 1b subfamily.

It localises to the secreted. The protein localises to the nematocyst. Its function is as follows. Has hemolytic activity. Inhibits voltage-gated potassium channels (Kv1/KCNA). The chain is U-metritoxin-Msn1a from Metridium senile (Brown sea anemone).